We begin with the raw amino-acid sequence, 214 residues long: Putative germin-like protein 9-2 (214 aa).

The first 25 residues, 1-25 (MALSYYSLLLLLLAVWAPALTLVMA), serve as a signal peptide directing secretion. N-linked (GlcNAc...) asparagine glycosylation is found at Asn-44 and Asn-60. The Cupin type-1 domain occupies 56–202 (RKVFNTSSAP…SFKTDVPTIL (147 aa)). Mn(2+)-binding residues include His-104, His-106, Glu-111, and His-150.

It belongs to the germin family. Oligomer (believed to be a pentamer but probably hexamer).

The protein resides in the secreted. It localises to the extracellular space. It is found in the apoplast. May play a role in plant defense. Probably has no oxalate oxidase activity even if the active site is conserved. The chain is Putative germin-like protein 9-2 from Oryza sativa subsp. japonica (Rice).